We begin with the raw amino-acid sequence, 92 residues long: Small ribosomal subunit protein uS19 (92 aa).

It belongs to the universal ribosomal protein uS19 family.

Its function is as follows. Protein S19 forms a complex with S13 that binds strongly to the 16S ribosomal RNA. This chain is Small ribosomal subunit protein uS19, found in Geobacillus kaustophilus (strain HTA426).